Reading from the N-terminus, the 169-residue chain is Protein HIGH ARSENIC CONTENT 1, mitochondrial (169 aa).

The N-terminal 59 residues, 1–59, are a transit peptide targeting the mitochondrion; that stretch reads MYTYSLLNLSHCRRQTRKKRKTDHTEGFLMEETKPKTVEDVETVDVYTAKGFLSTGHRY. A Rhodanese domain is found at 60 to 153; sequence LDVRTNEEFA…WVDAGFAGDK (94 aa). The active-site Cysteine persulfide intermediate is the Cys113.

As to expression, expressed in root hairs, epidermal cells at the surface of the root and in the pericycle within the stele.

Its subcellular location is the mitochondrion. It carries out the reaction [glutaredoxin]-dithiol + arsenate + glutathione + H(+) = glutathionyl-S-S-[glutaredoxin] + arsenite + H2O. With respect to regulation, inhibited by trobenzenesulphonic acid (TNBS). In terms of biological role, arsenate reductase critical for arsenic tolerance. Reduces arsenate to arsenite in the root, facilitating efflux of arsenic back into the soil to limit both its accumulation in the root and transport to the shoot. Essential for arsenite efflux from the root, but not necessary for arsenate uptake. The chain is Protein HIGH ARSENIC CONTENT 1, mitochondrial from Arabidopsis thaliana (Mouse-ear cress).